We begin with the raw amino-acid sequence, 429 residues long: Endoglucanase type C (429 aa).

The signal sequence occupies residues 1-18 (MKSLSLILSALAVQVAVA). Pyrrolidone carboxylic acid is present on Gln19. 9 disulfides stabilise this stretch: Cys36-Cys42, Cys66-Cys88, Cys78-Cys84, Cys156-Cys383, Cys190-Cys213, Cys194-Cys212, Cys233-Cys252, Cys241-Cys246, and Cys257-Cys333. Asn74 is a glycosylation site (N-linked (GlcNAc...) asparagine). Catalysis depends on Glu215, which acts as the Nucleophile. The active-site Proton donor is Glu220. Asn265 and Asn318 each carry an N-linked (GlcNAc...) asparagine glycan.

Belongs to the glycosyl hydrolase 7 (cellulase C) family.

It catalyses the reaction Endohydrolysis of (1-&gt;4)-beta-D-glucosidic linkages in cellulose, lichenin and cereal beta-D-glucans.. This chain is Endoglucanase type C, found in Fusarium oxysporum (Fusarium vascular wilt).